The sequence spans 776 residues: Palmitoyltransferase AKR1 (776 aa).

The Cytoplasmic segment spans residues 1 to 311; sequence MDQEMTTVAS…MEGKLGPRNT (311 aa). A disordered region spans residues 38 to 58; it reads RLDEGSSIRGGELERDSQEVG. ANK repeat units follow at residues 68 to 97, 103 to 132, 137 to 166, 170 to 199, 203 to 232, and 236 to 265; these read CHDL…SLNL, QDVT…DIDA, LKAT…DPNI, QGFN…AIDE, DGHT…SVNS, and AGMT…SLDA. The chain crosses the membrane as a helical span at residues 312–332; sequence ILAIFLLPIAVLWLIFSTFKW. Over 333–336 the chain is Lumenal; that stretch reads LPVY. Residues 337-357 traverse the membrane as a helical segment; sequence VGVPFAIAEFMGMQYTVVLVL. The Cytoplasmic segment spans residues 358–368; it reads LGHIKAQDKVS. A helical transmembrane segment spans residues 369 to 389; the sequence is TSNYFASIITASLIWVGYCWI. Residues 390-402 are Lumenal-facing; that stretch reads SRFAVNTPGYAFS. Residues 403-423 form a helical membrane-spanning segment; that stretch reads NLGFIIMFVGCCWTFWTAIVT. The Cytoplasmic portion of the chain corresponds to 424–498; that stretch reads DPGFVPKGQQ…NCVGAKNHRS (75 aa). Positions 454–504 constitute a DHHC domain; the sequence is NFCIVCMARKPLRSKHCRTCNRCVARFDHHCPWIWNCVGAKNHRSFLLFVL. The S-palmitoyl cysteine intermediate role is filled by Cys-484. A helical transmembrane segment spans residues 499-519; that stretch reads FLLFVLFLIGGIILFIRLTIA. At 520-553 the chain is on the lumenal side; sequence YIQQNAPEYIPTPNPGLTTCDISTTLCQAGDFDP. Residues 554-574 traverse the membrane as a helical segment; that stretch reads FLLCMALWSTLQLTWTSVLAI. The Cytoplasmic segment spans residues 575–776; it reads SHLWQVSRQM…RYEVVSEQEV (202 aa). A disordered region spans residues 628 to 665; it reads GAGEEAAGPPGAEAGPEGNALLPPPGGHVHGPQCRHGD. Low complexity predominate over residues 629-645; that stretch reads AGEEAAGPPGAEAGPEG.

The protein belongs to the DHHC palmitoyltransferase family. AKR/ZDHHC17 subfamily.

Its subcellular location is the early endosome membrane. The protein localises to the golgi apparatus membrane. The enzyme catalyses L-cysteinyl-[protein] + hexadecanoyl-CoA = S-hexadecanoyl-L-cysteinyl-[protein] + CoA. Functionally, palmitoyltransferase specific for casein kinase 1. The polypeptide is Palmitoyltransferase AKR1 (AKR1) (Cryptococcus neoformans var. neoformans serotype D (strain B-3501A) (Filobasidiella neoformans)).